The primary structure comprises 256 residues: Polycomb group RING finger protein 5 (256 aa).

Residues 18 to 57 form an RING-type zinc finger; that stretch reads CYICKGYLIKPTTVTECLHTFCKTCIVQHFEDSNDCPRCG. 2 stretches are compositionally biased toward basic and acidic residues: residues 94-103 and 110-120; these read ESEFWKKNKP and DTSKADKPKVD. A disordered region spans residues 94–133; it reads ESEFWKKNKPQENGQDDTSKADKPKVDEEGDENEDDKDYH.

In terms of assembly, component of a PRC1-like complex that contains PCGF5, RNF2 and UBE2D3. Interacts with RNF2; the interaction is direct. Interacts with CBX6, CBX7 and CBX8. Interacts with AUTS2; the interaction is direct. Identified in a complex that contains AUTS2, PCGF5, CSNK2B and RNF2.

The protein localises to the nucleus. Its subcellular location is the nucleoplasm. Functionally, component of a Polycomb group (PcG) multiprotein PRC1-like complex, a complex class required to maintain the transcriptionally repressive state of many genes, including Hox genes, throughout development. PcG PRC1 complex acts via chromatin remodeling and modification of histones; it mediates monoubiquitination of histone H2A 'Lys-119', rendering chromatin heritably changed in its expressibility. Within the PRC1-like complex, regulates RNF2 ubiquitin ligase activity. Plays a redundant role with PCGF3 as part of a PRC1-like complex that mediates monoubiquitination of histone H2A 'Lys-119' on the X chromosome and is required for normal silencing of one copy of the X chromosome in XX females. The chain is Polycomb group RING finger protein 5 (PCGF5) from Homo sapiens (Human).